Reading from the N-terminus, the 268-residue chain is Undecaprenyl-diphosphatase (268 aa).

7 helical membrane passes run 47–67 (FTVL…FAKL), 83–103 (FVIG…IAGK), 109–129 (LFNP…LMWV), 144–164 (FPLP…IPGV), 184–204 (AAEF…AYDF), 218–238 (TVAI…KAFL), and 246–266 (FTFF…ALAL).

The protein belongs to the UppP family.

The protein localises to the cell inner membrane. It catalyses the reaction di-trans,octa-cis-undecaprenyl diphosphate + H2O = di-trans,octa-cis-undecaprenyl phosphate + phosphate + H(+). Catalyzes the dephosphorylation of undecaprenyl diphosphate (UPP). Confers resistance to bacitracin. The polypeptide is Undecaprenyl-diphosphatase (Nitrobacter winogradskyi (strain ATCC 25391 / DSM 10237 / CIP 104748 / NCIMB 11846 / Nb-255)).